The following is a 349-amino-acid chain: Protein-glutamate methylesterase/protein-glutamine glutaminase (349 aa).

One can recognise a Response regulatory domain in the interval 5-122; sequence RVLSVDDSAL…REGMLAYNEM (118 aa). D56 carries the post-translational modification 4-aspartylphosphate. A CheB-type methylesterase domain is found at 152-344; sequence LLSSEKLIAI…QQMLAKISAG (193 aa). Residues S164, H190, and D286 contribute to the active site.

It belongs to the CheB family. As to quaternary structure, interacts with CheA. Binds to a C-terminal pentapeptide sequence carried by certain receptors. In terms of processing, phosphorylated by CheA. Phosphorylation of the N-terminal regulatory domain activates the methylesterase activity.

The protein resides in the cytoplasm. It carries out the reaction [protein]-L-glutamate 5-O-methyl ester + H2O = L-glutamyl-[protein] + methanol + H(+). The enzyme catalyses L-glutaminyl-[protein] + H2O = L-glutamyl-[protein] + NH4(+). With respect to regulation, methylesterase activity is activated via phosphorylation in response to negative chemotactic stimuli and is inhibited in the presence of attractants. Activation requires both CheA and CheW. Its function is as follows. Involved in chemotaxis. Part of a chemotaxis signal transduction system that modulates chemotaxis in response to various stimuli. Catalyzes the demethylation of specific methylglutamate residues introduced into the chemoreceptors (methyl-accepting chemotaxis proteins or MCP) by CheR. Also mediates the irreversible deamidation of specific glutamine residues to glutamic acid. Catalyzes its own deactivation by removing the activating phosphoryl group. This Escherichia coli (strain K12) protein is Protein-glutamate methylesterase/protein-glutamine glutaminase.